A 1894-amino-acid polypeptide reads, in one-letter code: MKAMPWNWTCLLSHLLMVGMGSSTLLTRQPAPLSQKQRSFVTFRGEPAEGFNHLVVDERTGHIYLGAVNRIYKLSSDLKVLVTHETGPDEDNPKCYPPRIVQTCNEPLTTTNNVNKMLLIDYKENRLIACGSLYQGICKLLRLEDLFKLGEPYHKKEHYLSGVNESGSVFGVIVSYSNLDDKLFIATAVDGKPEYFPTISSRKLTKNSEADGMFAYVFHDEFVASMIKIPSDTFTIIPDFDIYYVYGFSSGNFVYFLTLQPEMVSPPGSTTKEQVYTSKLVRLCKEDTAFNSYVEVPIGCERSGVEYRLLQAAYLSKAGAVLGRTLGVHPDDDLLFTVFSKGQKRKMKSLDESALCIFILKQINDRIKERLQSCYRGEGTLDLAWLKVKDIPCSSALLTIDDNFCGLDMNAPLGVSDMVRGIPVFTEDRDRMTSVIAYVYKNHSLAFVGTKSGKLKKIRVDGPRGNALQYETVQVVDPGPVLRDMAFSKDHEQLYIMSERQLTRVPVESCGQYQSCGECLGSGDPHCGWCVLHNTCTRKERCERSKEPRRFASEMKQCVRLTVHPNNISVSQYNVLLVLETYNVPELSAGVNCTFEDLSEMDGLVVGNQIQCYSPAAKEVPRIITENGDHHVVQLQLKSKETGMTFASTSFVFYNCSVHNSCLSCVESPYRCHWCKYRHVCTHDPKTCSFQEGRVKLPEDCPQLLRVDKILVPVEVIKPITLKAKNLPQPQSGQRGYECILNIQGSEQRVPALRFNSSSVQCQNTSYSYEGMEINNLPVELTVVWNGHFNIDNPAQNKVHLYKCGAMRESCGLCLKADPDFACGWCQGPGQCTLRQHCPAQESQWLELSGAKSKCTNPRITEIIPVTGPREGGTKVTIRGENLGLEFRDIASHVKVAGVECSPLVDGYIPAEQIVCEMGEAKPSQHAGFVEICVAVCRPEFMARSSQLYYFMTLTLSDLKPSRGPMSGGTQVTITGTNLNAGSNVVVMFGKQPCLFHRRSPSYIVCNTTSSDEVLEMKVSVQVDRAKIHQDLVFQYVEDPTIVRIEPEWSIVSGNTPIAVWGTHLDLIQNPQIRAKHGGKEHINICEVLNATEMTCQAPALALGPDHQSDLTERPEEFGFILDNVQSLLILNKTNFTYYPNPVFEAFGPSGILELKPGTPIILKGKNLIPPVAGGNVKLNYTVLVGEKPCTVTVSDVQLLCESPNLIGRHKVMARVGGMEYSPGMVYIAPDSPLSLPAIVSIAVAGGLLIIFIVAVLIAYKRKSRESDLTLKRLQMQMDNLESRVALECKEAFAELQTDIHELTSDLDGAGIPFLDYRTYTMRVLFPGIEDHPVLRDLEVPGYRQERVEKGLKLFAQLINNKVFLLSFIRTLESQRSFSMRDRGNVASLIMTVLQSKLEYATDVLKQLLADLIDKNLESKNHPKLLLRRTESVAEKMLTNWFTFLLYKFLKECAGEPLFSLFCAIKQQMEKGPIDAITGEARYSLSEDKLIRQQIDYKTLVLSCVSPDNANSPEVPVKILNCDTITQVKEKILDAIFKNVPCSHRPKAADMDLEWRQGSGARMILQDEDITTKIENDWKRLNTLAHYQVPDGSVVALVSKQVTAYNAVNNSTVSRTSASKYENMIRYTGSPDSLRSRTPMITPDLESGVKMWHLVKNHEHGDQKEGDRGSKMVSEIYLTRLLATKGTLQKFVDDLFETIFSTAHRGSALPLAIKYMFDFLDEQADKHGIHDPHVRHTWKSNCLPLRFWVNMIKNPQFVFDIHKNSITDACLSVVAQTFMDSCSTSEHRLGKDSPSNKLLYAKDIPSYKNWVERYYSDIGKMPAISDQDMNAYLAEQSRMHMNEFNTMSALSEIFSYVGKYSEEILGPLDHDDQCGKQKLAYKLEQVITLMSLDS.

The first 23 residues, 1 to 23, serve as a signal peptide directing secretion; that stretch reads MKAMPWNWTCLLSHLLMVGMGSS. The 484-residue stretch at 24-507 folds into the Sema domain; that stretch reads TLLTRQPAPL…SERQLTRVPV (484 aa). Residues 24–1237 are Extracellular-facing; the sequence is TLLTRQPAPL…IAPDSPLSLP (1214 aa). Intrachain disulfides connect C95/C104, C130/C138, C284/C405, C300/C356, C374/C393, C510/C527, C516/C558, C519/C536, C530/C542, and C593/C612. The PSI 1 domain occupies 509-559; the sequence is SCGQYQSCGECLGSGDPHCGWCVLHNTCTRKERCERSKEPRRFASEMKQCV. Residue N655 is glycosylated (N-linked (GlcNAc...) asparagine). PSI domains follow at residues 655 to 702 and 803 to 856; these read NCSV…EDCP and KCGA…SKCT. 4 consecutive IPT/TIG domains span residues 858 to 952, 954 to 1037, 1040 to 1139, and 1142 to 1230; these read PRIT…YYFM, LTLS…FQYV, PTIV…FTYY, and PVFE…YIAP. 3 N-linked (GlcNAc...) asparagine glycosylation sites follow: N1007, N1132, and N1180. Residues 1238-1258 traverse the membrane as a helical segment; sequence AIVSIAVAGGLLIIFIVAVLI. Topologically, residues 1259 to 1894 are cytoplasmic; that stretch reads AYKRKSRESD…QVITLMSLDS (636 aa). An N6-acetyllysine modification is found at K1350.

It belongs to the plexin family. Interacts with NRP1 and NRP2.

The protein resides in the cell membrane. Coreceptor for SEMA3A. Necessary for signaling by class 3 semaphorins and subsequent remodeling of the cytoskeleton. Plays a role in axon guidance in the developing nervous system. Class 3 semaphorins bind to a complex composed of a neuropilin and a plexin. The plexin modulates the affinity of the complex for specific semaphorins, and its cytoplasmic domain is required for the activation of down-stream signaling events in the cytoplasm. The chain is Plexin-A4 (PLXNA4) from Homo sapiens (Human).